The primary structure comprises 282 residues: Bifunctional protein FolD (282 aa).

NADP(+) contacts are provided by residues 164–166 (GRS) and Ser-189.

The protein belongs to the tetrahydrofolate dehydrogenase/cyclohydrolase family. Homodimer.

It catalyses the reaction (6R)-5,10-methylene-5,6,7,8-tetrahydrofolate + NADP(+) = (6R)-5,10-methenyltetrahydrofolate + NADPH. The catalysed reaction is (6R)-5,10-methenyltetrahydrofolate + H2O = (6R)-10-formyltetrahydrofolate + H(+). It functions in the pathway one-carbon metabolism; tetrahydrofolate interconversion. Its function is as follows. Catalyzes the oxidation of 5,10-methylenetetrahydrofolate to 5,10-methenyltetrahydrofolate and then the hydrolysis of 5,10-methenyltetrahydrofolate to 10-formyltetrahydrofolate. This Anaeromyxobacter dehalogenans (strain 2CP-C) protein is Bifunctional protein FolD.